The primary structure comprises 1188 residues: Probable RNA helicase armi (1188 aa).

723-730 serves as a coordination point for ATP; sequence GPPGSGKT. Positions 862–865 match the DEAG box motif; that stretch reads DEAG.

This sequence belongs to the DNA2/NAM7 helicase family. SDE3 subfamily. Forms a complex with piwi and fs(1)Yb; this interaction is required for proper piRNA loading and nuclear localization of piwi. The interaction of piwi and fs(1)Yb is likely to occur via armi. In terms of tissue distribution, abundant in oocytes and syncytial blastoderm. Expressed at low level throughout development, including somatic tissues. First apparent early in oogenesis, in the cytoplasm of stem cells and mitotically dividing cystoblasts. In regions 2a and 2b of the germarium, it is most concentrated in the center of the germline cysts, where the pro-oocyte is located. In stage 1 and early stage 2 egg chambers, it accumulates at the anterior of the oocyte, near the ring canals. It also extends through the ring canals forming a branched structure that links the early oocyte with adjacent nurse cells. In stage 3 cysts, it accumulates at the posterior cortex and localizes to extensions that pass through the oocyte into the nurse cells. Through stages 4 to 7, it continues to be somewhat enriched at the posterior cortex of the oocyte, but at significantly lower level. In stage 9 to 10 egg chambers, it is found throughout the cytoplasm of the oocyte and nurse cells, with slight enrichment at the oocyte cortex.

It is found in the cytoplasm. It catalyses the reaction ATP + H2O = ADP + phosphate + H(+). Its function is as follows. Probable RNA helicase required for axial polarization of the oocyte during early and mid oogenesis. Plays a central role in RNA interference (RNAi) process, a process that mediates mRNA destruction of translational repression. Required for the assembly of the RISC complex, a complex required for target RNA destruction or repression. May be required in the RISC assembly to unwind miRNAs, in the production of single-stranded miRNA from the double-stranded miRNA, a key step in RISC formation. Required both for the translational control of oskar (osk) mRNA and cytoskeletal polarization in the oocyte. Required for somatic primary piRNA biogenesis. Involved in repression of long interspersed nuclear elements (LINEs) including HeT-A, I-element and TART LINEs. The chain is Probable RNA helicase armi from Drosophila melanogaster (Fruit fly).